Here is a 1060-residue protein sequence, read N- to C-terminus: DNA-directed RNA polymerase subunit beta (1060 aa).

It belongs to the RNA polymerase beta chain family. In terms of assembly, in plastids the minimal PEP RNA polymerase catalytic core is composed of four subunits: alpha, beta, beta', and beta''. When a (nuclear-encoded) sigma factor is associated with the core the holoenzyme is formed, which can initiate transcription.

Its subcellular location is the plastid. The protein resides in the chloroplast. The catalysed reaction is RNA(n) + a ribonucleoside 5'-triphosphate = RNA(n+1) + diphosphate. Its function is as follows. DNA-dependent RNA polymerase catalyzes the transcription of DNA into RNA using the four ribonucleoside triphosphates as substrates. This is DNA-directed RNA polymerase subunit beta from Lactuca sativa (Garden lettuce).